Consider the following 98-residue polypeptide: NADH-ubiquinone oxidoreductase chain 4L (98 aa).

Helical transmembrane passes span 1–21 (MSLTYMNMLMAFTTSLLGLLM), 29–49 (SLLCLEGMMLSLFVMVTITIL), and 61–81 (IILLVFAACEAALGLSLLVMV).

The protein belongs to the complex I subunit 4L family. In terms of assembly, core subunit of respiratory chain NADH dehydrogenase (Complex I) which is composed of 45 different subunits.

The protein localises to the mitochondrion inner membrane. It catalyses the reaction a ubiquinone + NADH + 5 H(+)(in) = a ubiquinol + NAD(+) + 4 H(+)(out). In terms of biological role, core subunit of the mitochondrial membrane respiratory chain NADH dehydrogenase (Complex I) which catalyzes electron transfer from NADH through the respiratory chain, using ubiquinone as an electron acceptor. Part of the enzyme membrane arm which is embedded in the lipid bilayer and involved in proton translocation. The polypeptide is NADH-ubiquinone oxidoreductase chain 4L (MT-ND4L) (Ectophylla alba (White bat)).